Consider the following 593-residue polypeptide: Double-stranded RNA-binding protein 2 (593 aa).

DRBM domains lie at 1–70 (MYKN…ELSK) and 87–155 (IYKN…ELKQ). The segment covering 188–197 (LNQTNGGKTP) has biased composition (polar residues). Disordered regions lie at residues 188–221 (LNQTNGGKTPQQKEKQQSSNRPSSRRPSYPKSNA), 357–408 (APDF…ESNQ), and 546–593 (VNSS…KLHI). Positions 205 to 219 (SSNRPSSRRPSYPKS) are enriched in low complexity. Residues 378-408 (ESSPASEQESKSHTASSSATRSPSQQLESNQ) show a composition bias toward polar residues. The span at 572 to 586 (RTNTSDTSNAATASS) shows a compositional bias: low complexity.

In terms of biological role, binds double-stranded RNA. In Oryza sativa subsp. japonica (Rice), this protein is Double-stranded RNA-binding protein 2 (DRB2).